Reading from the N-terminus, the 371-residue chain is 4-hydroxy-3-methylbut-2-en-1-yl diphosphate synthase (flavodoxin) (371 aa).

[4Fe-4S] cluster is bound by residues cysteine 271, cysteine 274, cysteine 306, and glutamate 313.

Belongs to the IspG family. [4Fe-4S] cluster is required as a cofactor.

The enzyme catalyses (2E)-4-hydroxy-3-methylbut-2-enyl diphosphate + oxidized [flavodoxin] + H2O + 2 H(+) = 2-C-methyl-D-erythritol 2,4-cyclic diphosphate + reduced [flavodoxin]. Its pathway is isoprenoid biosynthesis; isopentenyl diphosphate biosynthesis via DXP pathway; isopentenyl diphosphate from 1-deoxy-D-xylulose 5-phosphate: step 5/6. In terms of biological role, converts 2C-methyl-D-erythritol 2,4-cyclodiphosphate (ME-2,4cPP) into 1-hydroxy-2-methyl-2-(E)-butenyl 4-diphosphate. The protein is 4-hydroxy-3-methylbut-2-en-1-yl diphosphate synthase (flavodoxin) of Actinobacillus succinogenes (strain ATCC 55618 / DSM 22257 / CCUG 43843 / 130Z).